We begin with the raw amino-acid sequence, 332 residues long: MKVAVLGAGAWGTALAGHLAARHDTLLWARDAALIAGLQARHENSRYLDGIALPDALRYDAELGAALAHGAADDALCVIAAPVAGLRTLCRAMRDAGCVPAHIVWVCKGFEADTHLLPHQVIAAELPEQLSNGVLSGPSFAREVGQGLPVALTVASVSAACRDRTLAAFHHGAMRIYTGDDVIGVEVGGAVKNVLAIATGIADGLGLGLNARAALITRGLAEMSRLGAALGGRTETFTGLTGLGDLILTATGDLSRNRTVGLQLAAGRSLNDILGALGHVAEGVRCAQAVLALARAQSIEMPITEAVCGVLFDGVAPRDAVSGLLRRDARAE.

3 residues coordinate NADPH: Trp11, Arg30, and Lys108. The sn-glycerol 3-phosphate site is built by Lys108, Gly137, and Ser139. Ala141 lines the NADPH pocket. Sn-glycerol 3-phosphate contacts are provided by Lys192, Asp245, Ser255, Arg256, and Asn257. Residue Lys192 is the Proton acceptor of the active site. Arg256 contacts NADPH. Residues Val280 and Glu282 each contribute to the NADPH site.

This sequence belongs to the NAD-dependent glycerol-3-phosphate dehydrogenase family.

It is found in the cytoplasm. The enzyme catalyses sn-glycerol 3-phosphate + NAD(+) = dihydroxyacetone phosphate + NADH + H(+). The catalysed reaction is sn-glycerol 3-phosphate + NADP(+) = dihydroxyacetone phosphate + NADPH + H(+). It participates in membrane lipid metabolism; glycerophospholipid metabolism. Its function is as follows. Catalyzes the reduction of the glycolytic intermediate dihydroxyacetone phosphate (DHAP) to sn-glycerol 3-phosphate (G3P), the key precursor for phospholipid synthesis. The chain is Glycerol-3-phosphate dehydrogenase [NAD(P)+] from Burkholderia multivorans (strain ATCC 17616 / 249).